Consider the following 368-residue polypeptide: MTVTGIIAEFNPFHNGHKYLLETAEGLKIIAMSGNFMQRGEPALIDKWIRSEMALKNGADIVVELPFFVSVQSADYFAQGAIDILCQLGIQQLAFGTENVIDYQKLIKVYEKKSEQMTAYLSTLEDTLSYPQKTQKMWEIFAGVKFSGQTPNHILGLSYAKASAGKHIQLCPIKRQGAAYHSKDKNHLLASASAIRQHLNDWDFISHSVPNAGLLINNPHMSWDHYFSFLKYQILNHSDLTSIFQVNDELASRIKKAIKVSQNIDHLVDTVATKRYTKARVRRILTYILVNAKEPTLPKGIHILGFTSKGQAHLKKLKKSRPLITRIGAETWDEMTQKADSIYQLGHQDIPEQSFGRIPIIIKNERLN.

Residues 7-20 (IAEF…HKYL), G96, N152, and R175 contribute to the ATP site.

Belongs to the TmcAL family.

It localises to the cytoplasm. The enzyme catalyses cytidine(34) in elongator tRNA(Met) + acetate + ATP = N(4)-acetylcytidine(34) in elongator tRNA(Met) + AMP + diphosphate. In terms of biological role, catalyzes the formation of N(4)-acetylcytidine (ac(4)C) at the wobble position of elongator tRNA(Met), using acetate and ATP as substrates. First activates an acetate ion to form acetyladenylate (Ac-AMP) and then transfers the acetyl group to tRNA to form ac(4)C34. The sequence is that of tRNA(Met) cytidine acetate ligase from Streptococcus pyogenes serotype M3 (strain SSI-1).